A 134-amino-acid polypeptide reads, in one-letter code: MPNLIILVFVGGAFGAMCREFIMLSVPRLADGFPMDIFVANIIAAFLLGLTTSFFKKDKINQYVHLMVGTGIMGGLSTFSSFVFGAVEMMKNPTEVLVSICYLVASLIVGFIAVELGLMIGPKEKPKDPQVASE.

Helical transmembrane passes span 4 to 24, 35 to 55, 67 to 87, and 100 to 120; these read LIIL…FIML, MDIF…TSFF, MVGT…FGAV, and ICYL…GLMI. The Na(+) site is built by glycine 74 and serine 77.

It belongs to the fluoride channel Fluc/FEX (TC 1.A.43) family.

It localises to the cell inner membrane. It catalyses the reaction fluoride(in) = fluoride(out). With respect to regulation, na(+) is not transported, but it plays an essential structural role and its presence is essential for fluoride channel function. In terms of biological role, fluoride-specific ion channel. Important for reducing fluoride concentration in the cell, thus reducing its toxicity. The protein is Fluoride-specific ion channel FluC 3 of Yersinia pseudotuberculosis serotype I (strain IP32953).